Consider the following 1084-residue polypeptide: Ribonucleoside-diphosphate reductase NrdEB subunit alpha (1084 aa).

Residues T152, 168–169 (SC), and G197 contribute to the substrate site. C169 and C793 are oxidised to a cystine. N379 acts as the Proton acceptor in catalysis. Residue C381 is the Cysteine radical intermediate of the active site. A DOD-type homing endonuclease domain is found at 503–654 (IMGIIAGDGT…VQKLLLNMGV (152 aa)). Residue E768 is the Proton acceptor of the active site. A substrate-binding site is contributed by 964-968 (PTGSI).

It belongs to the ribonucleoside diphosphate reductase large chain family. In terms of assembly, tetramer of two alpha and two beta subunits. This protein undergoes protein self-splicing that involves post-translational excision of the intervening region (intein) followed by peptide ligation.

It catalyses the reaction a 2'-deoxyribonucleoside 5'-diphosphate + [thioredoxin]-disulfide + H2O = a ribonucleoside 5'-diphosphate + [thioredoxin]-dithiol. With respect to regulation, under complex allosteric control mediated by deoxynucleoside triphosphates and ATP binding. The type of nucleotide bound at the specificity site determines substrate preference. It seems probable that ATP makes the enzyme reduce CDP and UDP, dGTP favors ADP reduction and dTTP favors GDP reduction. Functionally, provides the precursors necessary for DNA synthesis. Catalyzes the biosynthesis of deoxyribonucleotides from the corresponding ribonucleotides. This Bacillus subtilis (strain 168) protein is Ribonucleoside-diphosphate reductase NrdEB subunit alpha (nrdEB).